The primary structure comprises 189 residues: Pyridoxal 5'-phosphate synthase subunit PdxT (189 aa).

47 to 49 contacts L-glutamine; the sequence is GES. Cys-79 serves as the catalytic Nucleophile. Residues Arg-106 and 135 to 136 contribute to the L-glutamine site; that span reads IR. Residues His-171 and Glu-173 each act as charge relay system in the active site.

The protein belongs to the glutaminase PdxT/SNO family. In terms of assembly, in the presence of PdxS, forms a dodecamer of heterodimers. Only shows activity in the heterodimer.

It carries out the reaction aldehydo-D-ribose 5-phosphate + D-glyceraldehyde 3-phosphate + L-glutamine = pyridoxal 5'-phosphate + L-glutamate + phosphate + 3 H2O + H(+). The enzyme catalyses L-glutamine + H2O = L-glutamate + NH4(+). The protein operates within cofactor biosynthesis; pyridoxal 5'-phosphate biosynthesis. Functionally, catalyzes the hydrolysis of glutamine to glutamate and ammonia as part of the biosynthesis of pyridoxal 5'-phosphate. The resulting ammonia molecule is channeled to the active site of PdxS. This is Pyridoxal 5'-phosphate synthase subunit PdxT from Thermoanaerobacter pseudethanolicus (strain ATCC 33223 / 39E) (Clostridium thermohydrosulfuricum).